The chain runs to 348 residues: Dihydroorotase (348 aa).

Residues histidine 14 and histidine 16 each coordinate Zn(2+). Substrate-binding positions include 16 to 18 (HLR) and asparagine 42. Residues lysine 100, histidine 137, and histidine 175 each contribute to the Zn(2+) site. Position 100 is an N6-carboxylysine (lysine 100). Histidine 137 contributes to the substrate binding site. Position 220 (leucine 220) interacts with substrate. Residue aspartate 248 coordinates Zn(2+). The active site involves aspartate 248. Residues histidine 252 and alanine 264 each contribute to the substrate site.

It belongs to the metallo-dependent hydrolases superfamily. DHOase family. Class II DHOase subfamily. Homodimer. Requires Zn(2+) as cofactor.

It carries out the reaction (S)-dihydroorotate + H2O = N-carbamoyl-L-aspartate + H(+). It participates in pyrimidine metabolism; UMP biosynthesis via de novo pathway; (S)-dihydroorotate from bicarbonate: step 3/3. In terms of biological role, catalyzes the reversible cyclization of carbamoyl aspartate to dihydroorotate. This Ectopseudomonas mendocina (strain ymp) (Pseudomonas mendocina) protein is Dihydroorotase.